The chain runs to 333 residues: Tetraacyldisaccharide 4'-kinase (333 aa).

Position 55-62 (55-62 (TAGGNGKT)) interacts with ATP.

This sequence belongs to the LpxK family.

It catalyses the reaction a lipid A disaccharide + ATP = a lipid IVA + ADP + H(+). It participates in glycolipid biosynthesis; lipid IV(A) biosynthesis; lipid IV(A) from (3R)-3-hydroxytetradecanoyl-[acyl-carrier-protein] and UDP-N-acetyl-alpha-D-glucosamine: step 6/6. Its function is as follows. Transfers the gamma-phosphate of ATP to the 4'-position of a tetraacyldisaccharide 1-phosphate intermediate (termed DS-1-P) to form tetraacyldisaccharide 1,4'-bis-phosphate (lipid IVA). The polypeptide is Tetraacyldisaccharide 4'-kinase (Pectobacterium atrosepticum (strain SCRI 1043 / ATCC BAA-672) (Erwinia carotovora subsp. atroseptica)).